A 338-amino-acid chain; its full sequence is UDP-glucose 4-epimerase (338 aa).

NAD(+) contacts are provided by residues tyrosine 11–isoleucine 12, aspartate 31–serine 36, aspartate 58–isoleucine 59, phenylalanine 80–lysine 84, asparagine 99, serine 124, tyrosine 149, lysine 153, and phenylalanine 178. Substrate-binding residues include serine 124 and tyrosine 149. The active-site Proton acceptor is tyrosine 149. Substrate-binding positions include asparagine 179, asparagine 199–leucine 200, serine 216–phenylalanine 218, arginine 231, and arginine 292–aspartate 295.

It belongs to the NAD(P)-dependent epimerase/dehydratase family. Homodimer. NAD(+) is required as a cofactor.

It carries out the reaction UDP-alpha-D-glucose = UDP-alpha-D-galactose. Its pathway is carbohydrate metabolism; galactose metabolism. Involved in the metabolism of galactose. Catalyzes the conversion of UDP-galactose (UDP-Gal) to UDP-glucose (UDP-Glc) through a mechanism involving the transient reduction of NAD. By controlling the internal galactose concentration, it may be linked to the biosynthesis of lipopolysaccharide surface molecules, which are important for the pathogenesis of H.influenzae. The protein is UDP-glucose 4-epimerase (galE) of Haemophilus influenzae (strain ATCC 51907 / DSM 11121 / KW20 / Rd).